A 253-amino-acid polypeptide reads, in one-letter code: Indole-3-glycerol phosphate synthase (253 aa).

Belongs to the TrpC family.

It carries out the reaction 1-(2-carboxyphenylamino)-1-deoxy-D-ribulose 5-phosphate + H(+) = (1S,2R)-1-C-(indol-3-yl)glycerol 3-phosphate + CO2 + H2O. It participates in amino-acid biosynthesis; L-tryptophan biosynthesis; L-tryptophan from chorismate: step 4/5. This is Indole-3-glycerol phosphate synthase from Exiguobacterium sp. (strain ATCC BAA-1283 / AT1b).